The primary structure comprises 159 residues: 2-C-methyl-D-erythritol 2,4-cyclodiphosphate synthase (159 aa).

A divalent metal cation contacts are provided by Asp10 and His12. Residues Asp10–His12 and His36–Ser37 each bind 4-CDP-2-C-methyl-D-erythritol 2-phosphate. His44 is a binding site for a divalent metal cation. 4-CDP-2-C-methyl-D-erythritol 2-phosphate contacts are provided by residues Asp58–Gly60, Thr134–Glu137, Phe141, and Arg144.

This sequence belongs to the IspF family. As to quaternary structure, homotrimer. Requires a divalent metal cation as cofactor.

It carries out the reaction 4-CDP-2-C-methyl-D-erythritol 2-phosphate = 2-C-methyl-D-erythritol 2,4-cyclic diphosphate + CMP. Its pathway is isoprenoid biosynthesis; isopentenyl diphosphate biosynthesis via DXP pathway; isopentenyl diphosphate from 1-deoxy-D-xylulose 5-phosphate: step 4/6. Its function is as follows. Involved in the biosynthesis of isopentenyl diphosphate (IPP) and dimethylallyl diphosphate (DMAPP), two major building blocks of isoprenoid compounds. Catalyzes the conversion of 4-diphosphocytidyl-2-C-methyl-D-erythritol 2-phosphate (CDP-ME2P) to 2-C-methyl-D-erythritol 2,4-cyclodiphosphate (ME-CPP) with a corresponding release of cytidine 5-monophosphate (CMP). This chain is 2-C-methyl-D-erythritol 2,4-cyclodiphosphate synthase, found in Roseobacter denitrificans (strain ATCC 33942 / OCh 114) (Erythrobacter sp. (strain OCh 114)).